Here is a 120-residue protein sequence, read N- to C-terminus: Large ribosomal subunit protein uL18 (120 aa).

It belongs to the universal ribosomal protein uL18 family. Part of the 50S ribosomal subunit; part of the 5S rRNA/L5/L18/L25 subcomplex. Contacts the 5S and 23S rRNAs.

Its function is as follows. This is one of the proteins that bind and probably mediate the attachment of the 5S RNA into the large ribosomal subunit, where it forms part of the central protuberance. This chain is Large ribosomal subunit protein uL18, found in Clostridium botulinum (strain Eklund 17B / Type B).